The chain runs to 444 residues: Glycogen synthase (444 aa).

Residue Arg-15 coordinates ADP-alpha-D-glucose.

It belongs to the glycosyltransferase 1 family. Bacterial/plant glycogen synthase subfamily.

It carries out the reaction [(1-&gt;4)-alpha-D-glucosyl](n) + ADP-alpha-D-glucose = [(1-&gt;4)-alpha-D-glucosyl](n+1) + ADP + H(+). It participates in glycan biosynthesis; glycogen biosynthesis. Functionally, synthesizes alpha-1,4-glucan chains using ADP-glucose. The chain is Glycogen synthase from Deinococcus radiodurans (strain ATCC 13939 / DSM 20539 / JCM 16871 / CCUG 27074 / LMG 4051 / NBRC 15346 / NCIMB 9279 / VKM B-1422 / R1).